Reading from the N-terminus, the 203-residue chain is LexA repressor (203 aa).

The segment at residues 30–50 (VREICQAVSLKSTSTVHGHLK) is a DNA-binding region (H-T-H motif). Residues Ser127 and Lys164 each act as for autocatalytic cleavage activity in the active site.

It belongs to the peptidase S24 family. As to quaternary structure, homodimer.

It carries out the reaction Hydrolysis of Ala-|-Gly bond in repressor LexA.. Its function is as follows. Represses a number of genes involved in the response to DNA damage (SOS response), including recA and lexA. In the presence of single-stranded DNA, RecA interacts with LexA causing an autocatalytic cleavage which disrupts the DNA-binding part of LexA, leading to derepression of the SOS regulon and eventually DNA repair. In Clostridium perfringens (strain 13 / Type A), this protein is LexA repressor.